The chain runs to 160 residues: Serine-protein kinase RsbW (160 aa).

This sequence belongs to the anti-sigma-factor family.

The catalysed reaction is L-seryl-[protein] + ATP = O-phospho-L-seryl-[protein] + ADP + H(+). The enzyme catalyses L-threonyl-[protein] + ATP = O-phospho-L-threonyl-[protein] + ADP + H(+). Negative regulator of sigma-B activity. Phosphorylates and inactivates its specific antagonist protein, RsbV. Upon phosphorylation of RsbV, RsbW is released and binds to sigma-B, thereby blocking its ability to form an RNA polymerase holoenzyme (E-sigma-B). The chain is Serine-protein kinase RsbW from Bacillus thuringiensis (strain Al Hakam).